A 286-amino-acid polypeptide reads, in one-letter code: Short-chain dehydrogenase fogD (286 aa).

The NADP(+) site is built by Val8, Thr34, Asp55, Tyr147, Lys151, Val180, and Thr182. Tyr147 serves as the catalytic Proton acceptor. The active-site Lowers pKa of active site Tyr is Lys151.

It belongs to the short-chain dehydrogenases/reductases (SDR) family.

Its pathway is secondary metabolite biosynthesis. In terms of biological role, short-chain dehydrogenase; part of the gene cluster that mediates the biosynthesis of flavoglaucin and congeners (including aspergin, dihydroauroglaucin and auroglaucin), prenylated salicylaldehyde derivatives carrying a saturated or an unsaturated C-7 side chain. The PKS fogA releases the carboxylic acid (8E,10E,12E)-3,5,7-trihydroxytetradeca-8,10,12-trienoic acid as its product, as well as derivatives with one and two double bonds. FogA is indeed able to reduce the initial triketide, thus being at least partially responsible for the differently saturated heptyl side chains of flavoglaucin congeners. The oxidoreductases fogB, fogC and fogD modify the nascent polyketide in fogA-bound form and, together, fogA, fogB, fogC and fogD are necessary for the formation of the aromatic core and the cyclized PKS products are released as salicyl alcohols. In particular, fogB is responsible for oxidation of a hydroxyl group or reduction of remaining double bond(s) at the C-7 residue whereas fogD is probably involved in the reductive release of the modified PKS products. The cytochrome P450 monooxygenase fogE is then responsible for the hydroxylation at C-3 of the benzene ring. The fogE products are substrates of the prenyltransferase fogH and the prenylated benzyl alcohols are subsequently oxidized by the fogF to produce the final aryl aldehydes flavoglaucin and congeners. The short-chain dehydrogenase fogG does not seem to be involved in the biosynthesis of the prenylated salicylaldehyde derivatives. The sequence is that of Short-chain dehydrogenase fogD from Aspergillus ruber (strain CBS 135680).